Here is a 212-residue protein sequence, read N- to C-terminus: Adenine phosphoribosyltransferase (212 aa).

Belongs to the purine/pyrimidine phosphoribosyltransferase family. As to quaternary structure, homodimer.

It localises to the cytoplasm. It carries out the reaction AMP + diphosphate = 5-phospho-alpha-D-ribose 1-diphosphate + adenine. Its pathway is purine metabolism; AMP biosynthesis via salvage pathway; AMP from adenine: step 1/1. Its function is as follows. Catalyzes a salvage reaction resulting in the formation of AMP, that is energically less costly than de novo synthesis. The protein is Adenine phosphoribosyltransferase of Mycobacterium tuberculosis (strain CDC 1551 / Oshkosh).